Here is a 594-residue protein sequence, read N- to C-terminus: DNA ligase (594 aa).

Glu-280 lines the ATP pocket. The active-site N6-AMP-lysine intermediate is Lys-282. Residues Arg-287, Arg-316, Glu-345, Phe-385, Arg-456, and Lys-462 each coordinate ATP.

This sequence belongs to the ATP-dependent DNA ligase family. Requires Mg(2+) as cofactor.

The enzyme catalyses ATP + (deoxyribonucleotide)n-3'-hydroxyl + 5'-phospho-(deoxyribonucleotide)m = (deoxyribonucleotide)n+m + AMP + diphosphate.. Functionally, DNA ligase that seals nicks in double-stranded DNA during DNA replication, DNA recombination and DNA repair. The chain is DNA ligase from Halorubrum lacusprofundi (strain ATCC 49239 / DSM 5036 / JCM 8891 / ACAM 34).